Consider the following 208-residue polypeptide: Small ribosomal subunit protein uS4 (208 aa).

The S4 RNA-binding domain occupies 98-158 (CRLDTVSYRM…EKAKNHLRIK (61 aa)).

This sequence belongs to the universal ribosomal protein uS4 family. Part of the 30S ribosomal subunit. Contacts protein S5. The interaction surface between S4 and S5 is involved in control of translational fidelity.

Functionally, one of the primary rRNA binding proteins, it binds directly to 16S rRNA where it nucleates assembly of the body of the 30S subunit. In terms of biological role, with S5 and S12 plays an important role in translational accuracy. In Nitrosospira multiformis (strain ATCC 25196 / NCIMB 11849 / C 71), this protein is Small ribosomal subunit protein uS4.